The chain runs to 67 residues: Large ribosomal subunit protein bL35 (67 aa).

Positions 1 to 16 (MPKMKTKSGAKKRFRV) are enriched in basic residues. A disordered region spans residues 1–25 (MPKMKTKSGAKKRFRVRPGGTVKRG).

It belongs to the bacterial ribosomal protein bL35 family.

In Polaromonas sp. (strain JS666 / ATCC BAA-500), this protein is Large ribosomal subunit protein bL35.